Here is a 104-residue protein sequence, read N- to C-terminus: Large ribosomal subunit protein bL21 (104 aa).

Belongs to the bacterial ribosomal protein bL21 family. In terms of assembly, part of the 50S ribosomal subunit. Contacts protein L20.

In terms of biological role, this protein binds to 23S rRNA in the presence of protein L20. In Streptococcus agalactiae serotype Ia (strain ATCC 27591 / A909 / CDC SS700), this protein is Large ribosomal subunit protein bL21.